A 320-amino-acid chain; its full sequence is Beta-ketoacyl-[acyl-carrier-protein] synthase III (320 aa).

Active-site residues include C114 and H247. An ACP-binding region spans residues 248–252 (QANRR). Residue N277 is part of the active site.

Belongs to the thiolase-like superfamily. FabH family. As to quaternary structure, homodimer.

The protein resides in the cytoplasm. It carries out the reaction malonyl-[ACP] + acetyl-CoA + H(+) = 3-oxobutanoyl-[ACP] + CO2 + CoA. Its pathway is lipid metabolism; fatty acid biosynthesis. Catalyzes the condensation reaction of fatty acid synthesis by the addition to an acyl acceptor of two carbons from malonyl-ACP. Catalyzes the first condensation reaction which initiates fatty acid synthesis and may therefore play a role in governing the total rate of fatty acid production. Possesses both acetoacetyl-ACP synthase and acetyl transacylase activities. Its substrate specificity determines the biosynthesis of branched-chain and/or straight-chain of fatty acids. The polypeptide is Beta-ketoacyl-[acyl-carrier-protein] synthase III (Neisseria meningitidis serogroup B (strain ATCC BAA-335 / MC58)).